Reading from the N-terminus, the 489-residue chain is Betaine aldehyde dehydrogenase (489 aa).

Residues threonine 26 and aspartate 93 each coordinate K(+). 150 to 152 (GAW) lines the NAD(+) pocket. Lysine 162 (charge relay system) is an active-site residue. NAD(+) is bound at residue 176–179 (KPSE). Valine 180 provides a ligand contact to K(+). 229–232 (GVET) provides a ligand contact to NAD(+). Leucine 245 is a binding site for K(+). Residue glutamate 251 is the Proton acceptor of the active site. NAD(+)-binding residues include glycine 253, cysteine 285, and glutamate 386. Residue cysteine 285 is the Nucleophile of the active site. At cysteine 285 the chain carries Cysteine sulfenic acid (-SOH). Residues lysine 456 and glycine 459 each contribute to the K(+) site. Glutamate 463 serves as the catalytic Charge relay system.

It belongs to the aldehyde dehydrogenase family. As to quaternary structure, dimer of dimers. Requires K(+) as cofactor.

It catalyses the reaction betaine aldehyde + NAD(+) + H2O = glycine betaine + NADH + 2 H(+). It functions in the pathway amine and polyamine biosynthesis; betaine biosynthesis via choline pathway; betaine from betaine aldehyde: step 1/1. Its function is as follows. Involved in the biosynthesis of the osmoprotectant glycine betaine. Catalyzes the irreversible oxidation of betaine aldehyde to the corresponding acid. This is Betaine aldehyde dehydrogenase from Burkholderia multivorans (strain ATCC 17616 / 249).